The following is a 417-amino-acid chain: Serine hydroxymethyltransferase (417 aa).

Residues Leu121 and Gly125–Leu127 contribute to the (6S)-5,6,7,8-tetrahydrofolate site. Position 230 is an N6-(pyridoxal phosphate)lysine (Lys230). (6S)-5,6,7,8-tetrahydrofolate is bound at residue Ser355 to Phe357.

Belongs to the SHMT family. As to quaternary structure, homodimer. Pyridoxal 5'-phosphate is required as a cofactor.

Its subcellular location is the cytoplasm. The enzyme catalyses (6R)-5,10-methylene-5,6,7,8-tetrahydrofolate + glycine + H2O = (6S)-5,6,7,8-tetrahydrofolate + L-serine. The protein operates within one-carbon metabolism; tetrahydrofolate interconversion. Its pathway is amino-acid biosynthesis; glycine biosynthesis; glycine from L-serine: step 1/1. Catalyzes the reversible interconversion of serine and glycine with tetrahydrofolate (THF) serving as the one-carbon carrier. This reaction serves as the major source of one-carbon groups required for the biosynthesis of purines, thymidylate, methionine, and other important biomolecules. Also exhibits THF-independent aldolase activity toward beta-hydroxyamino acids, producing glycine and aldehydes, via a retro-aldol mechanism. The polypeptide is Serine hydroxymethyltransferase (Marinobacter nauticus (strain ATCC 700491 / DSM 11845 / VT8) (Marinobacter aquaeolei)).